The following is a 338-amino-acid chain: Clavatol oxidase claD (338 aa).

One can recognise a Fe2OG dioxygenase domain in the interval 193–299; that stretch reads DPMSLLRLLH…RYSVVFFYDG (107 aa). Fe cation is bound by residues histidine 222, aspartate 224, and histidine 280. 2-oxoglutarate is bound at residue arginine 290.

Belongs to the iron/ascorbate-dependent oxidoreductase family. Fe(2+) is required as a cofactor.

It carries out the reaction clavatol + 2-oxoglutarate + O2 = hydroxyclavatol + succinate + CO2. The protein operates within secondary metabolite biosynthesis. Its function is as follows. 2-oxoglutarate-dependent dioxygenase; part of the cla gene cluster that produces clavatol and ortho-quinone methide. The clavatol biosynthesis cluster cla and the terrestric acid cluster tra are both involved in the production of peniphenones and penilactones. The non-reducing PKS claF is responsible for the formation of clavatol from successive condensations of 3 malonyl-CoA units, presumably with a simple acetyl-CoA starter unit, and 2 methylation steps. The esterase claE probably collaborates with claF by catalyzing the hydrolysis of ACP-bound acyl intermediates to free the ACP from stalled intermediates. The clavatol oxidase claD then converts clavatol to hydroxyclavatol. Spontaneous dehydration of hydroxyclavatol leads to the accumulation of the highly active ortho-quinone methide. On the other hand, the PKS-NRPS hybrid traA is involved in the formation of crustosic acid, with the help of traB and traD. The polyketide synthase module (PKS) of traA is responsible for the synthesis of the polyketide backbone via the condensation of an acetyl-CoA starter unit with 3 malonyl-CoA units. The downstream nonribosomal peptide synthetase (NRPS) module then amidates the carboxyl end of the polyketide with L-malic acid. Because traA lacks a designated enoylreductase (ER) domain, the required activity is provided the enoyl reductase traG. Crustosic acid undergoes decarboxylation and isomerization to the terrestric acid, catalyzed by the 2-oxoglutarate-dependent dioxygenase traH. Both acids are further converted to the 2 gamma-butyrolactones (R)-5-methyltetronic acid and (S)-5-carboxylmethyltetronic acid, with involvement of the cytochrome P450 monooxygenase claJ. Spontaneous addition of the methide to these gamma-butyrolactones leads to peniphenone D and penilactone D, which undergo again stereospecific attacking by methide to give penilactones A and B. This chain is Clavatol oxidase claD, found in Penicillium crustosum (Blue mold fungus).